We begin with the raw amino-acid sequence, 175 residues long: tRNA (cytidine(56)-2'-O)-methyltransferase (175 aa).

S-adenosyl-L-methionine is bound at residue leucine 83.

It belongs to the aTrm56 family. Homodimer.

It localises to the cytoplasm. The enzyme catalyses cytidine(56) in tRNA + S-adenosyl-L-methionine = 2'-O-methylcytidine(56) in tRNA + S-adenosyl-L-homocysteine + H(+). In terms of biological role, specifically catalyzes the AdoMet-dependent 2'-O-ribose methylation of cytidine at position 56 in tRNAs. This is tRNA (cytidine(56)-2'-O)-methyltransferase from Methanosphaera stadtmanae (strain ATCC 43021 / DSM 3091 / JCM 11832 / MCB-3).